The chain runs to 414 residues: Gamma-glutamyl phosphate reductase (414 aa).

Belongs to the gamma-glutamyl phosphate reductase family.

The protein resides in the cytoplasm. It carries out the reaction L-glutamate 5-semialdehyde + phosphate + NADP(+) = L-glutamyl 5-phosphate + NADPH + H(+). It participates in amino-acid biosynthesis; L-proline biosynthesis; L-glutamate 5-semialdehyde from L-glutamate: step 2/2. Catalyzes the NADPH-dependent reduction of L-glutamate 5-phosphate into L-glutamate 5-semialdehyde and phosphate. The product spontaneously undergoes cyclization to form 1-pyrroline-5-carboxylate. The sequence is that of Gamma-glutamyl phosphate reductase from Geobacillus kaustophilus (strain HTA426).